Here is a 654-residue protein sequence, read N- to C-terminus: Arrestin domain-containing protein C (654 aa).

In terms of domain architecture, C2 spans 1 to 105; sequence MTQRSLKINI…AKRNLMDQWL (105 aa). Residues 616–647 adopt a coiled-coil conformation; sequence AKRIFLKIQQIQSERQKQQEQQEQQVVSNLEA.

Belongs to the arrestin family.

The chain is Arrestin domain-containing protein C (adcC) from Dictyostelium discoideum (Social amoeba).